A 449-amino-acid polypeptide reads, in one-letter code: Tubulin beta-5 chain (449 aa).

The GTP site is built by Q11, E70, S139, G143, T144, G145, N205, and N227. Residue E70 coordinates Mg(2+). A disordered region spans residues 427–449 (QDATADEEGEYDVEEEEEGDYET). Residues 430-449 (TADEEGEYDVEEEEEGDYET) show a composition bias toward acidic residues.

Belongs to the tubulin family. Dimer of alpha and beta chains. A typical microtubule is a hollow water-filled tube with an outer diameter of 25 nm and an inner diameter of 15 nM. Alpha-beta heterodimers associate head-to-tail to form protofilaments running lengthwise along the microtubule wall with the beta-tubulin subunit facing the microtubule plus end conferring a structural polarity. Microtubules usually have 13 protofilaments but different protofilament numbers can be found in some organisms and specialized cells. Requires Mg(2+) as cofactor.

Its subcellular location is the cytoplasm. The protein localises to the cytoskeleton. Functionally, tubulin is the major constituent of microtubules, a cylinder consisting of laterally associated linear protofilaments composed of alpha- and beta-tubulin heterodimers. Microtubules grow by the addition of GTP-tubulin dimers to the microtubule end, where a stabilizing cap forms. Below the cap, tubulin dimers are in GDP-bound state, owing to GTPase activity of alpha-tubulin. The chain is Tubulin beta-5 chain (TUBB5) from Arabidopsis thaliana (Mouse-ear cress).